Consider the following 422-residue polypeptide: Metallocarboxypeptidase A (422 aa).

The N-terminal stretch at 1 to 17 (MRSVLSFALLAANVVSA) is a signal peptide. Positions 18–112 (AVLAPFDYSG…FEAYSAGYAP (95 aa)) are cleaved as a propeptide — activation peptide. In terms of domain architecture, Peptidase M14 spans 119–419 (SYHSYQDHLS…AGTVAMLKAV (301 aa)). Positions 179 and 182 each coordinate Zn(2+). Substrate contacts are provided by residues 179 to 182 (HARE), Arg237, and 254 to 255 (NR). Cysteines 248 and 271 form a disulfide. Residue His309 coordinates Zn(2+). 310-311 (SY) serves as a coordination point for substrate. Catalysis depends on Glu385, which acts as the Proton donor/acceptor.

This sequence belongs to the peptidase M14 family. Requires Zn(2+) as cofactor.

Its subcellular location is the secreted. Functionally, extracellular metalloprotease that contributes to pathogenicity. This Arthroderma otae (strain ATCC MYA-4605 / CBS 113480) (Microsporum canis) protein is Metallocarboxypeptidase A (MCPA).